Here is a 331-residue protein sequence, read N- to C-terminus: Cilia- and flagella-associated protein 119 (331 aa).

Residue Ser34 is modified to Phosphoserine. 2 disordered regions span residues 236–271 and 309–331; these read LWPE…PEPE and SSKL…SKTK. Residues 286-317 are a coiled coil; it reads VNKELEQLQGLVEERLKASEERLSSKLTALER.

The protein resides in the cell projection. The protein localises to the cilium. It is found in the flagellum. It localises to the cytoplasmic vesicle. Its subcellular location is the secretory vesicle. The protein resides in the acrosome. The protein localises to the cytoplasm. The chain is Cilia- and flagella-associated protein 119 from Homo sapiens (Human).